A 176-amino-acid chain; its full sequence is Peroxiredoxin AHP1 (176 aa).

Serine 2 is modified (N-acetylserine). The region spanning 9–176 (FPAGDYKFQY…SSVESVLAHL (168 aa)) is the Thioredoxin domain. A Phosphoserine modification is found at serine 28. Lysine 32 is covalently cross-linked (Glycyl lysine isopeptide (Lys-Gly) (interchain with G-Cter in URM1)). Lysine 48 is covalently cross-linked (Glycyl lysine isopeptide (Lys-Gly) (interchain with G-Cter in ubiquitin); alternate). Lysine 48 participates in a covalent cross-link: Glycyl lysine isopeptide (Lys-Gly) (interchain with G-Cter in URM1); alternate. Serine 59 is subject to Phosphoserine. Residue cysteine 62 is the Cysteine sulfenic acid (-SOH) intermediate of the active site. Residue cysteine 62 is modified to Cysteine persulfide. Lysine 79 is covalently cross-linked (Glycyl lysine isopeptide (Lys-Gly) (interchain with G-Cter in URM1)). A Glycyl lysine isopeptide (Lys-Gly) (interchain with G-Cter in ubiquitin); alternate cross-link involves residue lysine 81. A Glycyl lysine isopeptide (Lys-Gly) (interchain with G-Cter in URM1); alternate cross-link involves residue lysine 81. Residue lysine 107 forms a Glycyl lysine isopeptide (Lys-Gly) (interchain with G-Cter in URM1) linkage. Lysine 113 is covalently cross-linked (Glycyl lysine isopeptide (Lys-Gly) (interchain with G-Cter in ubiquitin)). Serine 116 carries the post-translational modification Phosphoserine. At cysteine 120 the chain carries Cysteine persulfide. Lysine 124 participates in a covalent cross-link: Glycyl lysine isopeptide (Lys-Gly) (interchain with G-Cter in URM1). Lysine 156 participates in a covalent cross-link: Glycyl lysine isopeptide (Lys-Gly) (interchain with G-Cter in URM1); alternate. Lysine 156 participates in a covalent cross-link: Glycyl lysine isopeptide (Lys-Gly) (interchain with G-Cter in SUMO); alternate.

Belongs to the peroxiredoxin family. Prx5 subfamily. In terms of assembly, homodimer; disulfide-linked, upon oxidation. Post-translationally, conjugated to URM1, a ubiquitin-like protein, in response to oxidative stresses. The attachment of URM1 to lysine residues exclusively depends on the presence of a peroxidatic cysteine in the target protein, with low specificity for the particular residue, motif, or structural context at which urmylation can occur. The URM1-conjugation reaction is mechanistically and directly coupled to the process of cysteine persulfidation, transfering the sulfur atom of the URM1 thiocarboxyl group to redox-active cysteine residues in the target protein if it is exposed to oxidative conditions. In terms of processing, persulfidated on specific redox-active cysteine residues. Persulfidation (also called protein S-sulfhydration) may provide a molecular mechanism that enables cells to protect vulnerable cysteine residues from reactive oxygen species (ROS) under stress conditions.

It localises to the cytoplasm. It carries out the reaction a hydroperoxide + [thioredoxin]-dithiol = an alcohol + [thioredoxin]-disulfide + H2O. Functionally, thiol-specific peroxidase that catalyzes the reduction of hydrogen peroxide and organic hydroperoxides to water and alcohols, respectively. Plays a role in cell protection against oxidative stress by detoxifying peroxides and as sensor of hydrogen peroxide-mediated signaling events. Preferentially eliminates organic peroxides rather than hydrogen peroxide. Relays alkyl hydroperoxides as a signal to the transcription factor CAD1/YAP2 by inducing the formation of intramolecular disulfide bonds in CAD1, which causes its nuclear accumulation and activation. Involved in cellular Mn(2+) homeostasis. The sequence is that of Peroxiredoxin AHP1 from Saccharomyces cerevisiae (strain ATCC 204508 / S288c) (Baker's yeast).